The sequence spans 166 residues: NADPH-dependent 7-cyano-7-deazaguanine reductase (166 aa).

Cysteine 57 functions as the Thioimide intermediate in the catalytic mechanism. Aspartate 64 (proton donor) is an active-site residue. Residues 79-81 and 98-99 each bind substrate; these read VES and HE.

This sequence belongs to the GTP cyclohydrolase I family. QueF type 1 subfamily.

It is found in the cytoplasm. The enzyme catalyses 7-aminomethyl-7-carbaguanine + 2 NADP(+) = 7-cyano-7-deazaguanine + 2 NADPH + 3 H(+). The protein operates within tRNA modification; tRNA-queuosine biosynthesis. Catalyzes the NADPH-dependent reduction of 7-cyano-7-deazaguanine (preQ0) to 7-aminomethyl-7-deazaguanine (preQ1). This is NADPH-dependent 7-cyano-7-deazaguanine reductase from Staphylococcus saprophyticus subsp. saprophyticus (strain ATCC 15305 / DSM 20229 / NCIMB 8711 / NCTC 7292 / S-41).